The sequence spans 1088 residues: Calcium-transporting ATPase 5, plasma membrane-type (1088 aa).

Low complexity predominate over residues 1–11 (MESASSSLATS). The tract at residues 1 to 32 (MESASSSLATSGRRRSSSGGGGGSWGSIGSAA) is disordered. Residues 1–198 (MESASSSLAT…FLWDACKDLT (198 aa)) lie on the Cytoplasmic side of the membrane. The helical transmembrane segment at 199-219 (LIILMVAAAVSLALGITTEGI) threads the bilayer. Residues 220–221 (KE) lie on the Extracellular side of the membrane. Residues 222-242 (GWYDGASIAFAVLLVVVVTAT) form a helical membrane-spanning segment. Residues 243–338 (SDYKQSLQFQ…MSGCKVADGY (96 aa)) are Cytoplasmic-facing. The helical transmembrane segment at 339-359 (GTMLVTAVGINTEWGLLMASI) threads the bilayer. Topologically, residues 360-375 (SEDSGEETPLQVRLNG) are extracellular. The helical transmembrane segment at 376 to 396 (VATFIGMVGLSVALAVLVVLL) threads the bilayer. Residues 397–425 (ARYFTGHTYNPDGSVQYVKGKMGVGQTIR) lie on the Cytoplasmic side of the membrane. A helical membrane pass occupies residues 426–446 (GIVGIFTVAVTIVVVAVPEGL). Topologically, residues 447-851 (PLAVTLTLAF…GRSVYANIQK (405 aa)) are extracellular. Catalysis depends on aspartate 486, which acts as the 4-aspartylphosphate intermediate. Residues asparagine 532, asparagine 569, and asparagine 737 are each glycosylated (N-linked (GlcNAc...) asparagine). Mg(2+)-binding residues include aspartate 794 and aspartate 798. Residues 852–872 (FIQFQLTVNVAALIINVVAAV) traverse the membrane as a helical segment. The Cytoplasmic portion of the chain corresponds to 873–880 (SSGNVPLN). A helical membrane pass occupies residues 881–901 (AVQLLWVNLIMDTLGALALAT). The Extracellular segment spans residues 902-919 (EPPTDHLMQRPPVGRREP). The chain crosses the membrane as a helical span at residues 920 to 940 (LITNVMWRNLIIMALFQVIVL). Residues 941-1000 (LTLNFRGTSLLQLKNDNQAHADKVKNTFIFNTFVLCQVFNEFNARKPDELNIFKGITGNH) lie on the Cytoplasmic side of the membrane. Residues 1001-1021 (LFMAIVAITVVLQALIVEFLG) traverse the membrane as a helical segment. Topologically, residues 1022–1030 (KFTSTTRLT) are extracellular. Residues 1031 to 1051 (WQLWLVSIGLAFFSWPLAFVG) form a helical membrane-spanning segment. Residues 1052-1088 (KLIPVPERPLGDFFACCCPGSKQAADAKGDDADHSDV) lie on the Cytoplasmic side of the membrane.

This sequence belongs to the cation transport ATPase (P-type) (TC 3.A.3) family. Type IIB subfamily. Interacts with NOH1.

The protein resides in the cell membrane. The enzyme catalyses Ca(2+)(in) + ATP + H2O = Ca(2+)(out) + ADP + phosphate + H(+). Activated by calmodulin. Functionally, this magnesium-dependent enzyme catalyzes the hydrolysis of ATP coupled with the translocation of calcium from the cytosol out of the cell, into the endoplasmic reticulum, or into organelles. Involved in salt and drought stress tolerance. Involved in cold stress tolerance. In Oryza sativa subsp. japonica (Rice), this protein is Calcium-transporting ATPase 5, plasma membrane-type.